The following is a 152-amino-acid chain: Transcriptional regulator MraZ (152 aa).

SpoVT-AbrB domains are found at residues 5 to 52 (ATMV…TLPA) and 81 to 124 (ASEC…DEQT).

It belongs to the MraZ family. In terms of assembly, forms oligomers.

The protein localises to the cytoplasm. It is found in the nucleoid. In terms of biological role, negatively regulates its own expression and that of the subsequent genes in the proximal part of the division and cell wall (dcw) gene cluster. Acts by binding directly to DNA. May also regulate the expression of genes outside the dcw cluster. The chain is Transcriptional regulator MraZ from Yersinia enterocolitica serotype O:8 / biotype 1B (strain NCTC 13174 / 8081).